Consider the following 195-residue polypeptide: CASP-like protein 1B1 (195 aa).

Over 1–15 (MAKLALAATSGKSCK) the chain is Cytoplasmic. The chain crosses the membrane as a helical span at residues 16–36 (ILLGLRLLAFSATLSAAIVMG). The Extracellular portion of the chain corresponds to 37–67 (LNKETETFVVGKVGNTPIKATFTAKFDHTPA). The chain crosses the membrane as a helical span at residues 68 to 88 (FVFFVVANAMVSFHNLLMIAL). The Cytoplasmic segment spans residues 89–104 (QIFGGKMEFTGFRLLS). Residues 105-125 (VAILDMLNVTLISAAANAAAF) form a helical membrane-spanning segment. The Extracellular segment spans residues 126–154 (MAEVGKNGNKHARWDKICDRFATYCDHGA). Residues 155–175 (GALIAAFAGVILMLIISAASI) form a helical membrane-spanning segment. The Cytoplasmic portion of the chain corresponds to 176–195 (SRLAQQNKCCSTTASPSVVP).

It belongs to the Casparian strip membrane proteins (CASP) family. In terms of assembly, homodimer and heterodimers.

The protein resides in the cell membrane. In Arabidopsis lyrata subsp. lyrata (Lyre-leaved rock-cress), this protein is CASP-like protein 1B1.